We begin with the raw amino-acid sequence, 264 residues long: Thymidylate synthase (264 aa).

Arg21 serves as a coordination point for dUMP. His51 lines the (6R)-5,10-methylene-5,6,7,8-tetrahydrofolate pocket. Arg126–Arg127 provides a ligand contact to dUMP. Catalysis depends on Cys146, which acts as the Nucleophile. Residues Arg166–Asp169, Asn177, and His207–Tyr209 each bind dUMP. Asp169 serves as a coordination point for (6R)-5,10-methylene-5,6,7,8-tetrahydrofolate. Ala263 is a (6R)-5,10-methylene-5,6,7,8-tetrahydrofolate binding site.

It belongs to the thymidylate synthase family. Bacterial-type ThyA subfamily. In terms of assembly, homodimer.

The protein resides in the cytoplasm. It catalyses the reaction dUMP + (6R)-5,10-methylene-5,6,7,8-tetrahydrofolate = 7,8-dihydrofolate + dTMP. Its pathway is pyrimidine metabolism; dTTP biosynthesis. Catalyzes the reductive methylation of 2'-deoxyuridine-5'-monophosphate (dUMP) to 2'-deoxythymidine-5'-monophosphate (dTMP) while utilizing 5,10-methylenetetrahydrofolate (mTHF) as the methyl donor and reductant in the reaction, yielding dihydrofolate (DHF) as a by-product. This enzymatic reaction provides an intracellular de novo source of dTMP, an essential precursor for DNA biosynthesis. The polypeptide is Thymidylate synthase (Pseudomonas aeruginosa (strain LESB58)).